The following is a 117-amino-acid chain: Thioredoxin (117 aa).

The region spanning 2–116 (AISLTEEDFV…FENIIKDFFG (115 aa)) is the Thioredoxin domain. Residues C40 and C43 are joined by a disulfide bond.

This sequence belongs to the thioredoxin family.

Functionally, participates in various redox reactions through the reversible oxidation of its active center dithiol to a disulfide and catalyzes dithiol-disulfide exchange reactions. This Borreliella burgdorferi (strain ATCC 35210 / DSM 4680 / CIP 102532 / B31) (Borrelia burgdorferi) protein is Thioredoxin (trxA).